We begin with the raw amino-acid sequence, 924 residues long: Aminopeptidase 2 (924 aa).

The signal sequence occupies residues 1–45 (MASNNTSQRSGFSSFFCRLKTYFCNHFLCLFVLSFFPLSFRRLCL). Positions 46 to 57 (LCHLCEKSNLWL) are excised as a propeptide. Position 58 is an N-acetylserine; partial (S58). N-linked (GlcNAc...) asparagine glycosylation occurs at N92. E194 contacts substrate. N-linked (GlcNAc...) asparagine glycosylation is present at N229. A substrate-binding site is contributed by 327-331 (GAMEN). Position 363 (H363) interacts with Zn(2+). E364 acts as the Proton acceptor in catalysis. Zn(2+) contacts are provided by H367 and E386.

It belongs to the peptidase M1 family. Requires Zn(2+) as cofactor.

Its subcellular location is the secreted. The protein resides in the cell wall. Its activity is regulated as follows. Inactivated by metal-chelating agents phenanthroline and EDTA. Inhibited by bestatin, an aminopeptidase inhibitor. Not inhibited by pepstatin A and PMSF, inhibitors of aspartic and the serine proteases, respectively. Not inhibited by carboxypeptidase inhibitor. Its function is as follows. Metalloprotease that specifically hydrolyzes peptides with N-terminal alanine, arginine and leucine residues. The protein is Aminopeptidase 2 (APE2) of Candida albicans (strain SC5314 / ATCC MYA-2876) (Yeast).